Here is a 58-residue protein sequence, read N- to C-terminus: Transactivator protein ORF121 (58 aa).

In terms of biological role, stimulates the expression of 39k gene most probably by increasing IE1 expression. This chain is Transactivator protein ORF121 (AC121), found in Lepidoptera (butterflies and moths).